A 64-amino-acid polypeptide reads, in one-letter code: Ferredoxin-2 (64 aa).

The 4Fe-4S ferredoxin-type domain maps to 2–29; the sequence is RIHVDQDKCCGAGSCVLAAPDVFDQREE. Positions 10, 16, and 55 each coordinate [3Fe-4S] cluster.

It depends on [3Fe-4S] cluster as a cofactor.

In terms of biological role, electron transport protein for the cytochrome P-450-SU2 system. The chain is Ferredoxin-2 (subB) from Streptomyces griseolus.